Consider the following 78-residue polypeptide: RNA-binding protein Hfq (78 aa).

In terms of domain architecture, Sm spans 10-69 (DPFLNTLRKEHVPVSIYLVNGIKLQGQIESFDQYVVLLRNTVTQMVYKHAISTVVPARAV).

Belongs to the Hfq family. Homohexamer.

In terms of biological role, RNA chaperone that binds small regulatory RNA (sRNAs) and mRNAs to facilitate mRNA translational regulation in response to envelope stress, environmental stress and changes in metabolite concentrations. Also binds with high specificity to tRNAs. This is RNA-binding protein Hfq from Bordetella bronchiseptica (strain ATCC BAA-588 / NCTC 13252 / RB50) (Alcaligenes bronchisepticus).